Here is a 421-residue protein sequence, read N- to C-terminus: UDP-N-acetylglucosamine 1-carboxyvinyltransferase 1 (421 aa).

22–23 (KN) contacts phosphoenolpyruvate. Arg-95 is a UDP-N-acetyl-alpha-D-glucosamine binding site. Cys-119 acts as the Proton donor in catalysis. Cys-119 carries the post-translational modification 2-(S-cysteinyl)pyruvic acid O-phosphothioketal. UDP-N-acetyl-alpha-D-glucosamine-binding positions include 124-128 (RPIEQ), Asp-308, and Val-330.

It belongs to the EPSP synthase family. MurA subfamily.

The protein resides in the cytoplasm. It catalyses the reaction phosphoenolpyruvate + UDP-N-acetyl-alpha-D-glucosamine = UDP-N-acetyl-3-O-(1-carboxyvinyl)-alpha-D-glucosamine + phosphate. Its pathway is cell wall biogenesis; peptidoglycan biosynthesis. Its function is as follows. Cell wall formation. Adds enolpyruvyl to UDP-N-acetylglucosamine. The chain is UDP-N-acetylglucosamine 1-carboxyvinyltransferase 1 from Staphylococcus aureus (strain bovine RF122 / ET3-1).